The sequence spans 175 residues: DM domain-containing protein mab-23 (175 aa).

The DM DNA-binding region spans 8–56; sequence CQLCANHGIFNQPKKGHKQKCPYRTCPCSLCALNTKRRALDQIERQLKH. The interval 58 to 93 is disordered; it reads NEPMTGQTATSMASPTPECPLSPTTPKMTPHTPTSG. The segment covering 59–71 has biased composition (polar residues); it reads EPMTGQTATSMAS. A compositionally biased stretch (low complexity) spans 81–91; sequence TTPKMTPHTPT.

In terms of tissue distribution, expressed in a limited number of non-sex-specific tissues in males, including 6-8 unidentified neurons of the head, ventral body wall muscle, and the PHCL/R neurons.

The protein resides in the nucleus. Probable transcription factor that plays a role in the development of the dopaminergic neurons of the male-specific genital sensilla (simple sense organs) known as rays, by negatively regulating the activity of the transcription factor ast-1. Involved in male mating behavior, probably as a result of a role in the differentiation of male-specific diagonal muscles. Required for development of the male proctodeum. May be dispensable in hermaphrodites. The sequence is that of DM domain-containing protein mab-23 from Caenorhabditis elegans.